The primary structure comprises 1777 residues: Non-reducing polyketide synthase nscA (1777 aa).

Residues 27–261 are N-terminal acylcarrier protein transacylase domain (SAT); sequence DLFRRLDQHS…PLPVYDGLCH (235 aa). The Ketosynthase family 3 (KS3) domain occupies 396–829; the sequence is SSKLAIVGMA…GGNTTLLLED (434 aa). Catalysis depends on for beta-ketoacyl synthase activity residues cysteine 569, histidine 704, and histidine 747. The malonyl-CoA:ACP transacylase (MAT) domain stretch occupies residues 934–1212; the sequence is AFTGQGAYYH…SAIPSCRRNE (279 aa). The product template (PT) domain stretch occupies residues 1297–1616; the sequence is TSLVHQITAE…RLLMDRFFSP (320 aa). The segment at 1301 to 1437 is N-terminal hotdog fold; the sequence is HQITAETVEA…ATIRFEDPEA (137 aa). The 311-residue stretch at 1301–1611 folds into the PKS/mFAS DH domain; the sequence is HQITAETVEA…FRRVPRLLMD (311 aa). Histidine 1333 functions as the Proton acceptor; for dehydratase activity in the catalytic mechanism. The interval 1465-1611 is C-terminal hotdog fold; the sequence is ASRLSKPLAY…FRRVPRLLMD (147 aa). Aspartate 1522 (proton donor; for dehydratase activity) is an active-site residue. Positions 1674–1704 are disordered; that stretch reads LLATSSKSSTPKESPIVTPAESERAEPVDNS. The span at 1677–1688 shows a compositional bias: low complexity; the sequence is TSSKSSTPKESP. In terms of domain architecture, Carrier spans 1700–1777; it reads PVDNSMTSQC…EMTAWIEEYC (78 aa). At serine 1737 the chain carries O-(pantetheine 4'-phosphoryl)serine.

Requires pantetheine 4'-phosphate as cofactor.

The protein operates within secondary metabolite biosynthesis. In terms of biological role, non-reducing polyketide synthase; part of the gene cluster that mediates the biosynthesis of neosartoricin B, a prenylated anthracenone that probably exhibits T-cell antiproliferative activity, suggestive of a physiological role as an immunosuppressive agent. The non-reducing polyketide synthase nscA probably synthesizes and cyclizes the decaketide backbone. The hydrolase nscB then mediates the product release through hydrolysis followed by spontaneous decarboxylation. The prenyltransferase nscD catalyzes the addition of the dimethylallyl group to the aromatic C5. The FAD-dependent monooxygenase nscC is then responsible for the stereospecific hydroxylation at C2. Neosartoricin B can be converted into two additional compounds neosartoricins C and D. Neosartoricin C is a spirocyclic compound that is cyclized through the attack of C3 hydroxyl on C14, followed by dehydration. On the other hand, neosartoricin D is a further cyclized compound in which attack of C2 on C14 in neosartoricin C results in the formation of the acetal-containing dioxabicyclo-octanone ring. Both of these compounds are novel and possibly represent related metabolites of the gene cluster. The polypeptide is Non-reducing polyketide synthase nscA (Trichophyton equinum (strain ATCC MYA-4606 / CBS 127.97) (Horse ringworm fungus)).